Here is a 520-residue protein sequence, read N- to C-terminus: Glutamate--cysteine ligase (520 aa).

The protein belongs to the glutamate--cysteine ligase type 1 family. Type 1 subfamily.

The catalysed reaction is L-cysteine + L-glutamate + ATP = gamma-L-glutamyl-L-cysteine + ADP + phosphate + H(+). Its pathway is sulfur metabolism; glutathione biosynthesis; glutathione from L-cysteine and L-glutamate: step 1/2. The chain is Glutamate--cysteine ligase from Leptospira interrogans serogroup Icterohaemorrhagiae serovar copenhageni (strain Fiocruz L1-130).